Reading from the N-terminus, the 184-residue chain is Gastrokine-1 (184 aa).

The first 20 residues, 1–20 (MKLTMFVVGLLGLLAAPGFA), serve as a signal peptide directing secretion. Residues 54–148 (NNGWDSWNSL…MCRGIPTYVA (95 aa)) form the BRICHOS domain. A disulfide bridge links C81 with C140.

The protein belongs to the gastrokine family. Expressed in the stomach. Highly expressed specifically in surface cells of the antrum mucosa from where it is secreted.

It localises to the secreted. The protein resides in the cytoplasmic granule. Its subcellular location is the golgi apparatus. Its function is as follows. Has mitogenic activity and may be involved in maintaining the integrity of the gastric mucosal epithelium. This Mus musculus (Mouse) protein is Gastrokine-1 (Gkn1).